A 122-amino-acid chain; its full sequence is Large ribosomal subunit protein uL14 (122 aa).

This sequence belongs to the universal ribosomal protein uL14 family. Part of the 50S ribosomal subunit. Forms a cluster with proteins L3 and L19. In the 70S ribosome, L14 and L19 interact and together make contacts with the 16S rRNA in bridges B5 and B8.

Its function is as follows. Binds to 23S rRNA. Forms part of two intersubunit bridges in the 70S ribosome. The chain is Large ribosomal subunit protein uL14 from Jannaschia sp. (strain CCS1).